The primary structure comprises 225 residues: MKHLFKLDPAKNLPRNSVTKLIHSGTDGFIIGGTDNLEIEAVENLYELLAETDLPIFLEVSDESMILPEAEHFLIPVVLNTENSKWTHGLHKELIKELGDFIPWKRITSEGYVILNKDAKVAQLTEAKTDLTDEDIIAYARLAENIFRLPIFYVEYSGMYGDPEAVRKVSEVLSDTEFWYGGGIRSKEQAAEMAKYADTIIVGNIIYEDLEKALETATIFRKKTV.

Lysine 6 serves as a coordination point for sn-glycerol 1-phosphate. Mg(2+)-binding residues include aspartate 8 and threonine 34. Residues 153–158 (YVEYSG), glycine 183, and 203–204 (GN) each bind sn-glycerol 1-phosphate.

Belongs to the GGGP/HepGP synthase family. Group I subfamily. In terms of assembly, homodimer. Requires Mg(2+) as cofactor.

It catalyses the reaction sn-glycerol 1-phosphate + all-trans-heptaprenyl diphosphate = 3-heptaprenyl-sn-glycero-1-phosphate + diphosphate. The protein operates within membrane lipid metabolism; glycerophospholipid metabolism. Its function is as follows. Prenyltransferase that catalyzes in vivo the transfer of the heptaprenyl moiety of heptaprenyl pyrophosphate (HepPP; 35 carbon atoms) to the C3 hydroxyl of sn-glycerol-1-phosphate (G1P), producing heptaprenylglyceryl phosphate (HepGP). This reaction is an ether-bond-formation step in the biosynthesis of archaea-type G1P-based membrane lipids found in Bacillales. This is Heptaprenylglyceryl phosphate synthase from Listeria innocua serovar 6a (strain ATCC BAA-680 / CLIP 11262).